The following is a 54-amino-acid chain: UPF0391 membrane protein Reut_A0124 (54 aa).

The next 2 helical transmembrane spans lie at 5 to 25 (ALVF…GIAA) and 30 to 50 (IAKI…VMGL).

It belongs to the UPF0391 family.

Its subcellular location is the cell membrane. In Cupriavidus pinatubonensis (strain JMP 134 / LMG 1197) (Cupriavidus necator (strain JMP 134)), this protein is UPF0391 membrane protein Reut_A0124.